Here is a 182-residue protein sequence, read N- to C-terminus: MKMIIAVTFLGIVTIAFAEECRLMQPAANFDAATYFSIPHVYVTHSKNEPKTDVCREYDTSKTDGGSTTVITSNYKIKGQAVNNKVTCTSTGLKNGQTGQFSVVCQPPTGAAVTLTTSVLATDNQNYAILQRCPTSGQGNILVLQTAKEGVNPGVKDFFQKKGWNIDSWFSRTNVNCENIQS.

Positions 1 to 18 (MKMIIAVTFLGIVTIAFA) are cleaved as a signal peptide. 3 cysteine pairs are disulfide-bonded: cysteine 21/cysteine 133, cysteine 55/cysteine 177, and cysteine 88/cysteine 105.

This sequence belongs to the calycin superfamily. Triabin family. In terms of tissue distribution, expressed in salivary glands.

The protein localises to the secreted. Its function is as follows. Inhibits platelet aggregation and vasoconstriction through binding to distinct eicosanoids involved in inflammation (acts as a scavenger), and has a role in inhibiting host innate immunity by impairing platelet-assisted formation of neutrophil extracellular traps (NETs). Inhibits platelet aggregation by collagen, and low doses of thromboxane A2 mimetic (TXA2 mimetic), and arachidonic acid (AA) without affecting aggregation induced by ADP, convulxin (GP6 agonist), and PMA. Binds to TXA2, TXB2, prostaglandine H2 mimetic (PGH2 mimetic), PGJ2, and PGF2alpha. Binding is not observed to leukotrienes, AA, and biogenic amines (PGE1, 5(S)-HETE, 12(S)-HETE, 20-HETE, norepinephrine, epinephrine, serotonin, LTC4 and ADP). Induces relaxation of aorta rat previously contracted with TXA2 mimetic. Moreover, it also impairs platelet-assisted formation of neutrophil extracellular traps (NETs). NETs are web-like structures of DNA and proteins that play an important role in killing of pathogens. In addition, NETs are implicated in thrombus formation. In vivo, this protein exhibits antithrombotic activity in two distinct mice models that are highly dependent on platelets. It is noteworthy that it inhibits thrombosis without promoting excessive bleeding. In Triatoma infestans (Assassin bug), this protein is Triplatin.